The sequence spans 407 residues: Proteasome-activating nucleotidase (407 aa).

Residues 22-67 (KEKTQIAELESKVLRLELKNKDINRENVQIKKENEILKRELDKLRI) are a coiled coil. ATP contacts are provided by residues 192–197 (GTGKTL) and histidine 331. Residues 405 to 407 (MYG) are docks into pockets in the proteasome alpha-ring to cause gate opening.

It belongs to the AAA ATPase family. As to quaternary structure, homohexamer. The hexameric complex has a two-ring architecture resembling a top hat that caps the 20S proteasome core at one or both ends. Upon ATP-binding, the C-terminus of PAN interacts with the alpha-rings of the proteasome core by binding to the intersubunit pockets.

It localises to the cytoplasm. Functionally, ATPase which is responsible for recognizing, binding, unfolding and translocation of substrate proteins into the archaeal 20S proteasome core particle. Is essential for opening the gate of the 20S proteasome via an interaction with its C-terminus, thereby allowing substrate entry and access to the site of proteolysis. Thus, the C-termini of the proteasomal ATPase function like a 'key in a lock' to induce gate opening and therefore regulate proteolysis. Unfolding activity requires energy from ATP hydrolysis, whereas ATP binding alone promotes ATPase-20S proteasome association which triggers gate opening, and supports translocation of unfolded substrates. The sequence is that of Proteasome-activating nucleotidase from Methanococcus maripaludis (strain DSM 14266 / JCM 13030 / NBRC 101832 / S2 / LL).